A 577-amino-acid chain; its full sequence is MPKTINVRVTTMDAELEFAIQPNTTGKQLFDQVVKTIGLREVWFFGLQYQDTKGFSTWLKLNKKVTAQDVRKESPLLFKFRAKFYPEDVSEELIQDITQRLFFLQVKEGILNDDIYCPPETAVLLASYAVQSKYGDFNKEVHKSGYLAGDKLLPQRVLEQHKLNKDQWEERIQVWHEEHRGMLREDAVLEYLKIAQDLEMYGVNYFSSKNKKGSELWLGVDALGLNIYEQNDRLTPKIGFPWSEIRNISFNDKKFVIKPIDKKAPDFVFYAPRLRINKRILALCMGNHELYMRRRKPDTIEVQQMKAQAREEKHQKQMERALLENEKKKREMAEKEKEKIEREKEELMERLKQIEEQTKKAQQELEEQTRRALALEQERKRAQSEAEKLAKERQEAEEAKEALLKASRDQKKTQEQLALEMAELTARISQLEMARQKKESEAAEWQQKAQMVQEDLEKTRAELKTAMSTPHGAEPAENDQDEQDENGAEASADLRADAMAKDRSEEERTTEAEKNERVQKHLKALTSELANARDESKKTANDMIHAENMRLGRDKYKTLRQIRQGNTKQRIDEFESM.

An FERM domain is found at 2–295 (PKTINVRVTT…GNHELYMRRR (294 aa)). The residue at position 74 (Ser-74) is a Phosphoserine. Lys-79 carries the N6-acetyllysine modification. Lys-83 bears the N6-succinyllysine mark. A [IL]-x-C-x-x-[DE] motif motif is present at residues 115–120 (IYCPPE). Tyr-116 carries the post-translational modification Phosphotyrosine. Residue Cys-117 is modified to S-nitrosocysteine. 2 positions are modified to N6-acetyllysine: Lys-139 and Lys-165. Positions 376-414 (EQERKRAQSEAEKLAKERQEAEEAKEALLKASRDQKKTQ) are enriched in basic and acidic residues. Disordered stretches follow at residues 376 to 415 (EQER…KTQE) and 434 to 518 (ARQK…NERV). At Ser-407 the chain carries Phosphoserine. The span at 476 to 487 (AENDQDEQDENG) shows a compositional bias: acidic residues. The segment covering 492–518 (ADLRADAMAKDRSEEERTTEAEKNERV) has biased composition (basic and acidic residues). Position 527 is a phosphoserine (Ser-527). Thr-558 is subject to Phosphothreonine; by ROCK2 and STK10.

As to quaternary structure, binds NHERF1. In resting T-cells, part of a PAG1-NHERF1-MSN complex which is disrupted upon TCR activation. Interacts with PPP1R16B. Interacts with PDZD8. Interacts with SELPLG and SYK; mediates the activation of SYK by SELPLG. Interacts with PDPN (via cytoplasmic domain); activates RHOA and promotes epithelial-mesenchymal transition. Interacts with SPN/CD43 cytoplasmic tail, CD44 and ICAM2. Post-translationally, phosphorylation on Thr-558 is crucial for the formation of microvilli-like structures. Phosphorylation by ROCK2 suppresses the head-to-tail association of the N-terminal and C-terminal halves resulting in an opened conformation which is capable of actin and membrane-binding. Phosphorylation on Thr-558 by STK10 negatively regulates lymphocyte migration and polarization. In terms of processing, S-nitrosylation of Cys-117 is induced by interferon-gamma and oxidatively-modified low-densitity lipoprotein (LDL(ox)) implicating the iNOS-S100A8/9 transnitrosylase complex.

The protein localises to the cell membrane. It is found in the cytoplasm. Its subcellular location is the cytoskeleton. It localises to the apical cell membrane. The protein resides in the cell projection. The protein localises to the microvillus membrane. It is found in the microvillus. With respect to regulation, a head-to-tail association, of the N-terminal and C-terminal halves results in a closed conformation (inactive form) which is incapable of actin or membrane-binding. Probably involved in connections of major cytoskeletal structures to the plasma membrane. Plays a role in regulating the proliferation, migration, and adhesion of human lymphoid cells and participates in immunologic synapse formation. This Sus scrofa (Pig) protein is Moesin.